The sequence spans 511 residues: Maturase K (511 aa).

Belongs to the intron maturase 2 family. MatK subfamily.

It localises to the plastid. It is found in the chloroplast. In terms of biological role, usually encoded in the trnK tRNA gene intron. Probably assists in splicing its own and other chloroplast group II introns. The protein is Maturase K of Triticum aestivum (Wheat).